Here is a 412-residue protein sequence, read N- to C-terminus: UPF0754 membrane protein Synpcc7942_1098 (412 aa).

The next 2 helical transmembrane spans lie at 8–28 and 390–410; these read LWLL…DLAI and IGGV…VWSL.

The protein belongs to the UPF0754 family.

It localises to the cell inner membrane. In Synechococcus elongatus (strain ATCC 33912 / PCC 7942 / FACHB-805) (Anacystis nidulans R2), this protein is UPF0754 membrane protein Synpcc7942_1098.